The primary structure comprises 276 residues: Diaminopimelate epimerase (276 aa).

3 residues coordinate substrate: asparagine 13, glutamine 46, and asparagine 66. Cysteine 75 functions as the Proton donor in the catalytic mechanism. Substrate is bound by residues 76–77 (GN), asparagine 159, asparagine 192, and 210–211 (ER). Cysteine 219 acts as the Proton acceptor in catalysis. Position 220 to 221 (220 to 221 (GT)) interacts with substrate.

It belongs to the diaminopimelate epimerase family. As to quaternary structure, homodimer.

The protein resides in the cytoplasm. The catalysed reaction is (2S,6S)-2,6-diaminopimelate = meso-2,6-diaminopimelate. The protein operates within amino-acid biosynthesis; L-lysine biosynthesis via DAP pathway; DL-2,6-diaminopimelate from LL-2,6-diaminopimelate: step 1/1. Catalyzes the stereoinversion of LL-2,6-diaminopimelate (L,L-DAP) to meso-diaminopimelate (meso-DAP), a precursor of L-lysine and an essential component of the bacterial peptidoglycan. This Aeromonas hydrophila subsp. hydrophila (strain ATCC 7966 / DSM 30187 / BCRC 13018 / CCUG 14551 / JCM 1027 / KCTC 2358 / NCIMB 9240 / NCTC 8049) protein is Diaminopimelate epimerase.